A 377-amino-acid chain; its full sequence is Chaperone protein DnaJ (377 aa).

The J domain maps to 5 to 70 (DYYEILGVAK…QKRAAYDQFG (66 aa)). A CR-type zinc finger spans residues 130–208 (GTEVKIRVPS…CHGQGRVEEH (79 aa)). The Zn(2+) site is built by cysteine 143, cysteine 146, cysteine 160, cysteine 163, cysteine 182, cysteine 185, cysteine 196, and cysteine 199. CXXCXGXG motif repeat units lie at residues 143–150 (CGECHGSG), 160–167 (CGTCGGVG), 182–189 (CPRCHGTG), and 196–203 (CKACHGQG).

This sequence belongs to the DnaJ family. Homodimer. Zn(2+) serves as cofactor.

The protein resides in the cytoplasm. Functionally, participates actively in the response to hyperosmotic and heat shock by preventing the aggregation of stress-denatured proteins and by disaggregating proteins, also in an autonomous, DnaK-independent fashion. Unfolded proteins bind initially to DnaJ; upon interaction with the DnaJ-bound protein, DnaK hydrolyzes its bound ATP, resulting in the formation of a stable complex. GrpE releases ADP from DnaK; ATP binding to DnaK triggers the release of the substrate protein, thus completing the reaction cycle. Several rounds of ATP-dependent interactions between DnaJ, DnaK and GrpE are required for fully efficient folding. Also involved, together with DnaK and GrpE, in the DNA replication of plasmids through activation of initiation proteins. The polypeptide is Chaperone protein DnaJ (Thioalkalivibrio sulfidiphilus (strain HL-EbGR7)).